Reading from the N-terminus, the 151-residue chain is Putative olfactory receptor 13C6 (151 aa).

Residues methionine 1–threonine 27 are Extracellular-facing. A glycan (N-linked (GlcNAc...) asparagine) is linked at asparagine 5. The helical transmembrane segment at phenylalanine 28–leucine 48 threads the bilayer. Residues methionine 49–tyrosine 61 are Cytoplasmic-facing. The chain crosses the membrane as a helical span at residues phenylalanine 62 to isoleucine 82. At leucine 83–valine 100 the chain is on the extracellular side. The chain crosses the membrane as a helical span at residues glutamine 101–phenylalanine 121.

The protein belongs to the G-protein coupled receptor 1 family.

Its subcellular location is the cell membrane. Odorant receptor. This chain is Putative olfactory receptor 13C6, found in Homo sapiens (Human).